The chain runs to 127 residues: Egg cell-secreted protein 1.4 (127 aa).

Positions Met1–Gly25 are cleaved as a signal peptide.

Belongs to the plant egg cell-secreted peptide family. Restricted to female reproductive tissues, specifically accumulating in storage vesicles of the unfertilized egg cell.

The protein localises to the cytoplasmic vesicle. Its subcellular location is the secreted. In terms of biological role, involved in the regulation of gamete interactions during the double fertilization and to prevent multiple-pollen tube attraction; mediates the redistribution of the gamete fusogen HAP2/GCS1 to the cell surface after secretion upon sperm arrival. The chain is Egg cell-secreted protein 1.4 (EC1.4) from Arabidopsis thaliana (Mouse-ear cress).